We begin with the raw amino-acid sequence, 62 residues long: Trypsin inhibitor MCI-3 (62 aa).

Belongs to the protease inhibitor I13 (potato type I serine protease inhibitor) family.

The chain is Trypsin inhibitor MCI-3 from Momordica charantia (Bitter gourd).